The sequence spans 123 residues: Seminal vesicle secretory protein 5 (123 aa).

The signal sequence occupies residues 1 to 21 (MSPTGFFLLTVLLVLVTEAAS). The tract at residues 50–123 (GSSSTFGAFS…TKVKTRITRK (74 aa)) is disordered. A compositionally biased stretch (low complexity) spans 64–75 (SRSNFKSKSPSS). Over residues 77 to 87 (TREKVNEESRS) the composition is skewed to basic and acidic residues.

Belongs to the SVP2/SVP5/SVP6 family. In terms of tissue distribution, testis.

It is found in the secreted. Its subcellular location is the extracellular space. This Rattus norvegicus (Rat) protein is Seminal vesicle secretory protein 5 (Svs5).